The sequence spans 152 residues: UPF0225 protein YchJ (152 aa).

It belongs to the UPF0225 family.

The protein is UPF0225 protein YchJ of Shigella flexneri serotype 5b (strain 8401).